Here is a 142-residue protein sequence, read N- to C-terminus: Small ribosomal subunit protein uS12 (142 aa).

The interval 1-43 (MPTFNQLVRKGRKVIEKKSNSPALQKGFNSKKKKPTDVNSPQK) is disordered. Aspartate 102 is modified (3-methylthioaspartic acid).

It belongs to the universal ribosomal protein uS12 family. Part of the 30S ribosomal subunit. Contacts proteins S8 and S17. May interact with IF1 in the 30S initiation complex.

In terms of biological role, with S4 and S5 plays an important role in translational accuracy. Functionally, interacts with and stabilizes bases of the 16S rRNA that are involved in tRNA selection in the A site and with the mRNA backbone. Located at the interface of the 30S and 50S subunits, it traverses the body of the 30S subunit contacting proteins on the other side and probably holding the rRNA structure together. The combined cluster of proteins S8, S12 and S17 appears to hold together the shoulder and platform of the 30S subunit. The chain is Small ribosomal subunit protein uS12 from Ruminiclostridium cellulolyticum (strain ATCC 35319 / DSM 5812 / JCM 6584 / H10) (Clostridium cellulolyticum).